A 507-amino-acid chain; its full sequence is Pyruvate kinase (507 aa).

Arg-50 serves as a coordination point for substrate. The K(+) site is built by Asn-52, Ser-54, Asp-84, and Thr-85. 52-55 provides a ligand contact to ATP; it reads NFSH. The ATP site is built by Arg-91 and Lys-177. Glu-242 is a Mg(2+) binding site. Substrate-binding residues include Gly-265, Asp-266, and Thr-298. Asp-266 is a binding site for Mg(2+).

It belongs to the pyruvate kinase family. As to quaternary structure, homotetramer. Requires Mg(2+) as cofactor. K(+) serves as cofactor.

The catalysed reaction is pyruvate + ATP = phosphoenolpyruvate + ADP + H(+). The protein operates within carbohydrate degradation; glycolysis; pyruvate from D-glyceraldehyde 3-phosphate: step 5/5. The chain is Pyruvate kinase (pyk) from Dictyostelium discoideum (Social amoeba).